We begin with the raw amino-acid sequence, 351 residues long: tRNA pseudouridine synthase D (351 aa).

Asp-96 (nucleophile) is an active-site residue. In terms of domain architecture, TRUD spans 174–304 (GAPNYFGPQR…MKPERRPLVA (131 aa)). Residues 244–268 (VLPGEPEPSGAGPTGPLWGDGGTLA) form a disordered region.

This sequence belongs to the pseudouridine synthase TruD family.

It catalyses the reaction uridine(13) in tRNA = pseudouridine(13) in tRNA. In terms of biological role, responsible for synthesis of pseudouridine from uracil-13 in transfer RNAs. The chain is tRNA pseudouridine synthase D from Marinobacter nauticus (strain ATCC 700491 / DSM 11845 / VT8) (Marinobacter aquaeolei).